The chain runs to 204 residues: Peptide chain release factor homolog (204 aa).

Positions 2–98 are rRNA-recognition domain, N-terminus; sequence ILLQLSSAQG…KNWFLGIGRF (97 aa). Positions 99 to 107 are linker 1; the sequence is TADEQEQSD. The segment at 108 to 161 is GGQ domain; it reads AIRYETLRSSGPGGQHVNKTDSAVRATHLASGISVKVQSERSQHANKRLARLLI. Positions 120–122 match the GGQ motif motif; it reads GGQ. The linker 2 stretch occupies residues 162-179; that stretch reads AWKLEQQQQENSAALKSQ. Positions 180 to 204 are rRNA-recognition domain, C-terminus; the sequence is RRMFHHQIERGNPRRTFTGMAFIEG.

It belongs to the prokaryotic/mitochondrial release factor family. In terms of assembly, found in the A site of damaged 70S ribosomes, but not in undamaged ribosomes. Contacts (damaged) 16S rRNA, 23S rRNA and ribosomal protein uS12, but not mRNA.

In terms of biological role, peptide chain release-like factor that acts on 70S ribosomes with specific damage to their decoding center (cleavage of 16S rRNA between adenine-1493 and guanosine-1494, E.coli 16S rRNA numbering). Probably acts as a peptidyl-tRNA hydrolase, allowing release of the nascent chain and dissociation of the 30S and 50S subunits. Can release mRNA as short as 19 nucleotides (nt, mRNA-19, which has a single amino acid in the P-site and only a single nt in the A-site) from the ribosome. This specific cleavage is inflicted by CdiA (ECL_04451) or by colicin E3-type (ColE3) proteins. In vivo the PrfH-RtcB2 pair restores growth in the presence of ribotoxins that specifically create this damage. The protein is Peptide chain release factor homolog of Escherichia coli (strain ATCC 25922 / DSM 1103 / LMG 8223 / NCIMB 12210 / NCTC 12241 / WDCM 00013 / Seattle 1946).